Reading from the N-terminus, the 398-residue chain is S-adenosylmethionine synthase (398 aa).

ATP is bound at residue histidine 17. Mg(2+) is bound at residue aspartate 19. Glutamate 45 serves as a coordination point for K(+). The L-methionine site is built by glutamate 58 and glutamine 101. The interval 101 to 111 (QSPDIAQGVDT) is flexible loop. ATP is bound by residues 176–178 (DGK), 243–244 (RF), aspartate 252, 258–259 (RK), and lysine 279. Aspartate 252 is a binding site for L-methionine. Lysine 283 contacts L-methionine.

It belongs to the AdoMet synthase family. In terms of assembly, homotetramer; dimer of dimers. Mg(2+) is required as a cofactor. Requires K(+) as cofactor.

The protein resides in the cytoplasm. It carries out the reaction L-methionine + ATP + H2O = S-adenosyl-L-methionine + phosphate + diphosphate. It participates in amino-acid biosynthesis; S-adenosyl-L-methionine biosynthesis; S-adenosyl-L-methionine from L-methionine: step 1/1. Its function is as follows. Catalyzes the formation of S-adenosylmethionine (AdoMet) from methionine and ATP. The overall synthetic reaction is composed of two sequential steps, AdoMet formation and the subsequent tripolyphosphate hydrolysis which occurs prior to release of AdoMet from the enzyme. The polypeptide is S-adenosylmethionine synthase (Staphylococcus saprophyticus subsp. saprophyticus (strain ATCC 15305 / DSM 20229 / NCIMB 8711 / NCTC 7292 / S-41)).